The sequence spans 858 residues: Bifunctional uridylyltransferase/uridylyl-removing enzyme (858 aa).

Positions Met-1–Leu-324 are uridylyltransferase. The tract at residues Ser-325–Leu-681 is uridylyl-removing. The 123-residue stretch at Val-443–Leu-565 folds into the HD domain. ACT domains lie at Gln-682 to Ser-761 and Ile-790 to Val-858.

The protein belongs to the GlnD family. Requires Mg(2+) as cofactor.

It catalyses the reaction [protein-PII]-L-tyrosine + UTP = [protein-PII]-uridylyl-L-tyrosine + diphosphate. The catalysed reaction is [protein-PII]-uridylyl-L-tyrosine + H2O = [protein-PII]-L-tyrosine + UMP + H(+). With respect to regulation, uridylyltransferase (UTase) activity is inhibited by glutamine, while glutamine activates uridylyl-removing (UR) activity. In terms of biological role, modifies, by uridylylation and deuridylylation, the PII regulatory proteins (GlnB and homologs), in response to the nitrogen status of the cell that GlnD senses through the glutamine level. Under low glutamine levels, catalyzes the conversion of the PII proteins and UTP to PII-UMP and PPi, while under higher glutamine levels, GlnD hydrolyzes PII-UMP to PII and UMP (deuridylylation). Thus, controls uridylylation state and activity of the PII proteins, and plays an important role in the regulation of nitrogen assimilation and metabolism. The sequence is that of Bifunctional uridylyltransferase/uridylyl-removing enzyme from Burkholderia pseudomallei (strain 1106a).